Reading from the N-terminus, the 238-residue chain is Uridylate kinase (238 aa).

Residue K12–G15 participates in ATP binding. G54 provides a ligand contact to UMP. The ATP site is built by G55 and R59. UMP is bound by residues D74 and T135–T142. Residues T162, Y168, and D171 each coordinate ATP.

The protein belongs to the UMP kinase family. In terms of assembly, homohexamer.

The protein resides in the cytoplasm. It carries out the reaction UMP + ATP = UDP + ADP. It functions in the pathway pyrimidine metabolism; CTP biosynthesis via de novo pathway; UDP from UMP (UMPK route): step 1/1. Inhibited by UTP. Functionally, catalyzes the reversible phosphorylation of UMP to UDP. The protein is Uridylate kinase of Bordetella bronchiseptica (strain ATCC BAA-588 / NCTC 13252 / RB50) (Alcaligenes bronchisepticus).